The sequence spans 331 residues: MKKSLIALTLAALPVAAMADVTLYGTIKAGVETSRSVEHNGGQVVSVETGTGIVDLGSKIGFKGQEDLGNGLKAIWQVEQKASIAGTDSGWGNRQSFIGLKGGFGKLRVGRLNSVLKDTGDINPWDSKSDYLGVNKIAEPEARLISVRYDSPEFAGLSGSVQYALNDNAGKYNSESYHAGFNYKNGGFFVQYGGAYKRHVRVDENVNIEKYQIHRLVSGYDNDALHASVAVQQQDAKLVEDNYSHNSQTEVAATLAYRFGNVTPRVSYAHGFKGSFDDADLSNDYDQVVVGAEYDFSKRTSALVSAGWLQEGKGENKFVSTAGGVGLRHKF.

Positions 1 to 19 (MKKSLIALTLAALPVAAMA) are cleaved as a signal peptide.

This sequence belongs to the Gram-negative porin family. Homotrimer.

Its subcellular location is the cell outer membrane. Functionally, serves as a slightly cation selective porin. The polypeptide is Major outer membrane protein P.IB (porB) (Neisseria meningitidis serogroup B).